The sequence spans 409 residues: Elongation factor Tu, cyanelle (409 aa).

Residues 10–214 (KPHVNIGTIG…AVDEYIPTPE (205 aa)) enclose the tr-type G domain. A G1 region spans residues 19 to 26 (GHVDHGKT). Residue 19-26 (GHVDHGKT) participates in GTP binding. Thr26 provides a ligand contact to Mg(2+). A G2 region spans residues 60 to 64 (GITIN). Residues 81–84 (DCPG) form a G3 region. GTP-binding positions include 81 to 85 (DCPGH) and 136 to 139 (NKED). The segment at 136-139 (NKED) is G4. Positions 174 to 176 (SAL) are G5.

This sequence belongs to the TRAFAC class translation factor GTPase superfamily. Classic translation factor GTPase family. EF-Tu/EF-1A subfamily.

Its subcellular location is the plastid. It localises to the cyanelle. The enzyme catalyses GTP + H2O = GDP + phosphate + H(+). Functionally, GTP hydrolase that promotes the GTP-dependent binding of aminoacyl-tRNA to the A-site of ribosomes during protein biosynthesis. This chain is Elongation factor Tu, cyanelle (tufA), found in Cyanophora paradoxa.